The primary structure comprises 355 residues: MSGQPKRLMVMAGGTGGHVFPGLAVAHHLMAQGWQVRWLGTADRMEADLVPKHGIEIDFIRISGLRGKGVKALLLAPVRIFNAWRQARAIMKRFKPDVVLGMGGYVSGPGGLAAWSLGIPVVLHEQNGIAGLTNKWLAKIASRVMQAFPGAFPKAEVVGNPVRTDVLALPLPQARLAGREGPVRVLVVGGSQGARILNQTMPQVAARLGDAVTIWHQSGKGAQAEVQQAYAAASQPQHKVTEFIDDMAAAYAWADVVVCRSGALTVSEIAAAGLPALFVPFQHKDRQQYWNALPLEKAGAAKILEQPQFTVDAVSETLKGWDRATLLEMAERARAAAIPDATERVADEVRAVARA.

Residues Thr15–Gly17, Asn127, Arg163, Ser191, Ile244, Ala263–Glu268, and Gln288 contribute to the UDP-N-acetyl-alpha-D-glucosamine site.

The protein belongs to the glycosyltransferase 28 family. MurG subfamily.

It is found in the cell inner membrane. It catalyses the reaction di-trans,octa-cis-undecaprenyl diphospho-N-acetyl-alpha-D-muramoyl-L-alanyl-D-glutamyl-meso-2,6-diaminopimeloyl-D-alanyl-D-alanine + UDP-N-acetyl-alpha-D-glucosamine = di-trans,octa-cis-undecaprenyl diphospho-[N-acetyl-alpha-D-glucosaminyl-(1-&gt;4)]-N-acetyl-alpha-D-muramoyl-L-alanyl-D-glutamyl-meso-2,6-diaminopimeloyl-D-alanyl-D-alanine + UDP + H(+). It functions in the pathway cell wall biogenesis; peptidoglycan biosynthesis. Functionally, cell wall formation. Catalyzes the transfer of a GlcNAc subunit on undecaprenyl-pyrophosphoryl-MurNAc-pentapeptide (lipid intermediate I) to form undecaprenyl-pyrophosphoryl-MurNAc-(pentapeptide)GlcNAc (lipid intermediate II). The chain is UDP-N-acetylglucosamine--N-acetylmuramyl-(pentapeptide) pyrophosphoryl-undecaprenol N-acetylglucosamine transferase from Cronobacter sakazakii (strain ATCC BAA-894) (Enterobacter sakazakii).